The sequence spans 113 residues: UPF0482 protein YnfB (113 aa).

Residues Met-1–Ala-28 form the signal peptide.

The protein belongs to the UPF0482 family.

This chain is UPF0482 protein YnfB, found in Escherichia coli O157:H7.